An 88-amino-acid polypeptide reads, in one-letter code: Gene 86 protein (88 aa).

Residues 64–88 (WRGNPSAYDDEVGDLEGFETQHSDY) are disordered. Acidic residues predominate over residues 71 to 80 (YDDEVGDLEG).

The chain is Gene 86 protein (86) from Mycobacterium (Mycobacteriophage L5).